A 387-amino-acid polypeptide reads, in one-letter code: Acyl-CoA dehydrogenase FadE29 (387 aa).

FAD-binding positions include 123-126, Thr132, and Thr158; that span reads IGYT. Residue Glu241 is the Proton acceptor of the active site. An FAD-binding site is contributed by 367–369; that stretch reads VNE.

It belongs to the acyl-CoA dehydrogenase family. As to quaternary structure, heterotetramer composed of FadE28 and FadE29. The cofactor is FAD.

It carries out the reaction 3-oxochol-4-en-22-oyl-CoA + A = 3-oxochola-4,17-dien-22-oyl-CoA + AH2. It functions in the pathway steroid metabolism; cholesterol degradation. Its function is as follows. Involved in the third cycle of side chain dehydrogenation in the beta-oxidation of cholesterol catabolism. Contributes partly to the virulence by increasing the efficiency of beta-oxidation. Catalyzes the dehydrogenation of 2'-propanoyl-CoA ester side chains of 3-oxo-4-pregnene-20-carboxyl-CoA (3-OPC-CoA) to yield 3-oxo-4,17-pregnadiene-20-carboxyl-CoA (3-OPDC-CoA). Also able to dehydrogenate steroyl-CoA such as 3-oxo-chol-4-en-24-oyl-CoA (3-OCO-CoA), 1beta-(2'-propanoyl-CoA)-3a-alpha-H- 7a-beta-methylhexahydro-4-indanone (indanone-CoA ester), hexahydroindanone and pregenenone. The polypeptide is Acyl-CoA dehydrogenase FadE29 (fadE29) (Mycobacterium tuberculosis (strain ATCC 25618 / H37Rv)).